The chain runs to 103 residues: Turripeptide OL55-like (103 aa).

Post-translationally, contains 8 disulfide bonds. In terms of tissue distribution, expressed by the venom duct.

It is found in the secreted. Its function is as follows. Acts as a neurotoxin by inhibiting an ion channel. The polypeptide is Turripeptide OL55-like (Lophiotoma albina (Sea snail)).